The following is a 157-amino-acid chain: Small ribosomal subunit protein uS17 (157 aa).

Belongs to the universal ribosomal protein uS17 family.

In Dunaliella tertiolecta (Green alga), this protein is Small ribosomal subunit protein uS17 (RPS11).